We begin with the raw amino-acid sequence, 377 residues long: Progesterone receptor (377 aa).

The tract at residues glutamate 1–glutamine 15 is modulating, Pro-Rich. Positions lysine 16–phenylalanine 90 form a DNA-binding region, nuclear receptor. NR C4-type zinc fingers lie at residues cysteine 18–cysteine 38 and cysteine 54–cysteine 78. Serine 127 carries the phosphoserine modification. Residues glutamine 130–isoleucine 364 form the NR LBD domain. Residues leucine 138–lysine 377 are AF2; mediates transcriptional activation.

It belongs to the nuclear hormone receptor family. NR3 subfamily. Interacts with CUEDC2, SMARD1 and with UNC45A. Interacts with PRMT2. Interacts with NCOA2 and NCOA1. Interacts with KLF9. Interacts with GTF2B. In terms of processing, palmitoylated by ZDHHC7 and ZDHHC21. Palmitoylation is required for plasma membrane targeting and for rapid intracellular signaling via ERK and AKT kinases and cAMP generation.

The protein resides in the nucleus. The steroid hormones and their receptors are involved in the regulation of eukaryotic gene expression and affect cellular proliferation and differentiation in target tissues. Transcriptional activator of several progesteron-dependent promoters in a variety of cell types. Involved in activation of SRC-dependent MAPK signaling on hormone stimulation. The polypeptide is Progesterone receptor (PGR) (Ovis aries (Sheep)).